The primary structure comprises 1319 residues: Protein Jumonji (1319 aa).

The segment covering 1–11 (MSKERPKRNII) has biased composition (basic residues). 7 disordered regions span residues 1–23 (MSKE…GMPW), 50–130 (DGID…PSLP), 173–265 (DEED…NTNG), 351–382 (YSNN…QSIN), 396–478 (HKMT…KALN), 499–537 (PIQK…PKRA), and 549–599 (QQRA…RSRA). The segment covering 61 to 70 (ASLSNGQLNG) has biased composition (polar residues). The segment covering 74–88 (GHKEDGSRSQRKDGG) has biased composition (basic and acidic residues). A Nuclear localization signal motif is present at residues 96-102 (PAKKRPR). A compositionally biased stretch (basic residues) spans 98 to 107 (KKRPRLHAQR). The segment covering 109 to 121 (FAQSQPNSPSNTP) has biased composition (polar residues). The segment covering 173–185 (DEEDLEDEDEIEE) has biased composition (acidic residues). The span at 191–200 (VASTSCQSTP) shows a compositional bias: polar residues. Positions 221–251 (KDKELTPRSKARESSVGRDRSERCDESEISH) are enriched in basic and acidic residues. Over residues 372 to 382 (LSHSGKAQSIN) the composition is skewed to polar residues. Positions 413-424 (SAREEEVVDRPV) are enriched in basic and acidic residues. Pro residues predominate over residues 505–515 (PAPPPSPPAAP). Composition is skewed to low complexity over residues 516–525 (ASPSMPQNPA) and 554–570 (TNPT…ASKS). Over residues 583–598 (RLDRDRERERERERSR) the composition is skewed to basic and acidic residues. Residues 607-648 (VPIFKPSSREFQDPLVYLDSFREQVESCGLCRVLPPTDWRPE) enclose the JmjN domain. In terms of domain architecture, ARID spans 671-779 (WGPNVQKLAC…FLLSYDLLSP (109 aa)). Residues 798–811 (RKRGPLEGHSDNGH) show a composition bias toward basic and acidic residues. The segment at 798 to 818 (RKRGPLEGHSDNGHHSLALPR) is disordered. Residues 944–948 (GSGFP) carry the GSGFP motif motif. The JmjC domain occupies 954-1118 (PFSKHGWNLT…LGYEAAKDLK (165 aa)).

Belongs to the JARID2 family. As to quaternary structure, associates with the PRC2 complex.

The protein resides in the nucleus. Functionally, regulator of histone methyltransferase complexes that plays an essential role in embryonic development. Acts by modulating histone methyltransferase activity and promoting the recruitment of histone methyltransferase complexes to their target genes. Binds DNA and mediates the recruitment of the PRC2 complex to target genes in embryonic stem cells. Does not have histone demethylase activity but regulates activity of various histone methyltransferase complexes. In embryonic stem cells, it associates with the PRC2 complex and inhibits trimethylation of 'Lys-27' of histone H3 (H3K27me3) by the PRC2 complex, thereby playing a key role in differentiation of embryonic stem cells and normal development. In Danio rerio (Zebrafish), this protein is Protein Jumonji (jarid2b).